The primary structure comprises 210 residues: Cytochrome c oxidase subunit 2 (210 aa).

Over 1-20 the chain is Mitochondrial intermembrane; that stretch reads MAFILSFWMIFLLDSVIVLL. The helical transmembrane segment at 21–42 threads the bilayer; it reads SFVCFVCVWICALLFSTVLLVS. Topologically, residues 43 to 60 are mitochondrial matrix; sequence KLNNIYCTWDFTASKFID. The chain crosses the membrane as a helical span at residues 61–86; sequence VYWFTIGGMFSLGLLLRLCLLLYFGH. Residues 87-210 are Mitochondrial intermembrane-facing; that stretch reads LNFVSFDLCK…GFMPIVICFI (124 aa). The Cu cation site is built by His-157, Cys-192, Glu-194, Cys-196, His-200, and Met-203. Glu-194 is a Mg(2+) binding site.

The protein belongs to the cytochrome c oxidase subunit 2 family. In terms of assembly, component of the cytochrome c oxidase (complex IV, CIV), a multisubunit enzyme composed of a catalytic core of 3 subunits and several supernumerary subunits. The complex exists as a monomer or a dimer and forms supercomplexes (SCs) in the inner mitochondrial membrane with ubiquinol-cytochrome c oxidoreductase (cytochrome b-c1 complex, complex III, CIII). The cofactor is Cu cation.

Its subcellular location is the mitochondrion inner membrane. It carries out the reaction 4 Fe(II)-[cytochrome c] + O2 + 8 H(+)(in) = 4 Fe(III)-[cytochrome c] + 2 H2O + 4 H(+)(out). Its function is as follows. Component of the cytochrome c oxidase, the last enzyme in the mitochondrial electron transport chain which drives oxidative phosphorylation. The respiratory chain contains 3 multisubunit complexes succinate dehydrogenase (complex II, CII), ubiquinol-cytochrome c oxidoreductase (cytochrome b-c1 complex, complex III, CIII) and cytochrome c oxidase (complex IV, CIV), that cooperate to transfer electrons derived from NADH and succinate to molecular oxygen, creating an electrochemical gradient over the inner membrane that drives transmembrane transport and the ATP synthase. Cytochrome c oxidase is the component of the respiratory chain that catalyzes the reduction of oxygen to water. Electrons originating from reduced cytochrome c in the intermembrane space (IMS) are transferred via the dinuclear copper A center (CU(A)) of subunit 2 and heme A of subunit 1 to the active site in subunit 1, a binuclear center (BNC) formed by heme A3 and copper B (CU(B)). The BNC reduces molecular oxygen to 2 water molecules using 4 electrons from cytochrome c in the IMS and 4 protons from the mitochondrial matrix. In Leishmania tarentolae (Sauroleishmania tarentolae), this protein is Cytochrome c oxidase subunit 2.